Consider the following 143-residue polypeptide: Large ribosomal subunit protein uL15 (143 aa).

The tract at residues 1–52 is disordered; the sequence is MKLNTLAPAAGSKSAPKRLGRGIGSGLGKTSGKGHKGQKARSGGYHKVGFEG. A compositionally biased stretch (gly residues) spans 21-31; sequence RGIGSGLGKTS.

Belongs to the universal ribosomal protein uL15 family. In terms of assembly, part of the 50S ribosomal subunit.

Functionally, binds to the 23S rRNA. The sequence is that of Large ribosomal subunit protein uL15 from Francisella tularensis subsp. holarctica (strain FTNF002-00 / FTA).